We begin with the raw amino-acid sequence, 192 residues long: UPF0301 protein Rru_A3059 (192 aa).

It belongs to the UPF0301 (AlgH) family.

The polypeptide is UPF0301 protein Rru_A3059 (Rhodospirillum rubrum (strain ATCC 11170 / ATH 1.1.1 / DSM 467 / LMG 4362 / NCIMB 8255 / S1)).